The following is a 205-amino-acid chain: ATP phosphoribosyltransferase (205 aa).

The protein belongs to the ATP phosphoribosyltransferase family. Short subfamily. In terms of assembly, heteromultimer composed of HisG and HisZ subunits.

The protein resides in the cytoplasm. The catalysed reaction is 1-(5-phospho-beta-D-ribosyl)-ATP + diphosphate = 5-phospho-alpha-D-ribose 1-diphosphate + ATP. It functions in the pathway amino-acid biosynthesis; L-histidine biosynthesis; L-histidine from 5-phospho-alpha-D-ribose 1-diphosphate: step 1/9. Its function is as follows. Catalyzes the condensation of ATP and 5-phosphoribose 1-diphosphate to form N'-(5'-phosphoribosyl)-ATP (PR-ATP). Has a crucial role in the pathway because the rate of histidine biosynthesis seems to be controlled primarily by regulation of HisG enzymatic activity. The sequence is that of ATP phosphoribosyltransferase from Ruthia magnifica subsp. Calyptogena magnifica.